The primary structure comprises 650 residues: XK-related protein 4 (650 aa).

Basic and acidic residues predominate over residues 1 to 15 (MAAKSDGRLKMKKSS). The segment at 1–44 (MAAKSDGRLKMKKSSDVAFTPLQNSDHSGSVQGLAPGLPSGSGA) is disordered. The span at 21-31 (PLQNSDHSGSV) shows a compositional bias: polar residues. Helical transmembrane passes span 114–134 (WILA…WLAV) and 144–164 (WFGL…VFSF). Phosphoserine is present on serine 200. The tract at residues 200-238 (SAAGEGEARPSTPQRQASNASKSNIAAANSGSNSSGATR) is disordered. Residues 216 to 238 (ASNASKSNIAAANSGSNSSGATR) are compositionally biased toward low complexity. A run of 8 helical transmembrane segments spans residues 248 to 268 (CSFC…GQIW), 306 to 326 (HLLA…CIIV), 331 to 351 (LQAL…WALA), 365 to 385 (KPIS…TIAA), 396 to 418 (VFQL…WIVH), 428 to 448 (WEEI…WFNV), 457 to 477 (LFIY…LWYL), and 487 to 507 (FAIP…VFML).

It belongs to the XK family. As to quaternary structure, homodimer; homodimerization takes place upon caspase cleavage. Interacts with the processed C-terminus of XRCC4 (protein XRCC4, C-terminus); interaction promotes the phospholipid scramblase activity. In terms of processing, undergoes proteolytic processing by caspase-3 (CASP3), caspase-6 (CASP6) and caspase-7 (CASP7) to generate the XK-related protein 4, processed form, leading to its activation.

Its subcellular location is the cell membrane. It carries out the reaction a 1,2-diacyl-sn-glycero-3-phospho-L-serine(in) = a 1,2-diacyl-sn-glycero-3-phospho-L-serine(out). Its activity is regulated as follows. Phospholipid scramblase activity is activated upon caspase cleavage to generate the XK-related protein 4, processed form. Does not act prior the onset of apoptosis. With respect to regulation, homodimerizes upon caspase cleavage. Phospholipid scramblase activity is activated following interaction with the processed C-terminus of XRCC4 (protein XRCC4, C-terminus). In terms of biological role, phospholipid scramblase that promotes phosphatidylserine exposure on apoptotic cell surface. Phosphatidylserine is a specific marker only present at the surface of apoptotic cells and acts as a specific signal for engulfment. In Homo sapiens (Human), this protein is XK-related protein 4.